A 141-amino-acid chain; its full sequence is Keratin-associated protein 19-2 (141 aa).

The tract at residues 5–135 is 48 X 2 AA repeats of G-[YCGS]; sequence SGYSGGLGYG…CRRSSCCGGY (131 aa).

Belongs to the KRTAP type 19 family. As to quaternary structure, interacts with hair keratins. Strong expression in narrowly defined pattern restricted to the lower and middle cortical regions of the hair shaft in both developing and cycling hair. During hair follicle regression (catagen), expression levels decrease until expression is no longer detectable in follicles at resting stage (telogen).

Functionally, in the hair cortex, hair keratin intermediate filaments are embedded in an interfilamentous matrix, consisting of hair keratin-associated proteins (KRTAP), which are essential for the formation of a rigid and resistant hair shaft through their extensive disulfide bond cross-linking with abundant cysteine residues of hair keratins. The matrix proteins include the high-sulfur and high-glycine-tyrosine keratins. The protein is Keratin-associated protein 19-2 (Krtap19-2) of Mus musculus (Mouse).